A 272-amino-acid chain; its full sequence is Shikimate dehydrogenase (NADP(+)) (272 aa).

Shikimate is bound by residues 14 to 16 (SKS) and threonine 61. Residue lysine 65 is the Proton acceptor of the active site. Glutamate 77 lines the NADP(+) pocket. Residues asparagine 86 and aspartate 102 each contribute to the shikimate site. Residues 126 to 130 (GAGGA), 149 to 154 (NRTQEK), and methionine 213 contribute to the NADP(+) site. Tyrosine 215 contributes to the shikimate binding site. Glycine 237 lines the NADP(+) pocket.

The protein belongs to the shikimate dehydrogenase family. In terms of assembly, homodimer.

It carries out the reaction shikimate + NADP(+) = 3-dehydroshikimate + NADPH + H(+). It participates in metabolic intermediate biosynthesis; chorismate biosynthesis; chorismate from D-erythrose 4-phosphate and phosphoenolpyruvate: step 4/7. Functionally, involved in the biosynthesis of the chorismate, which leads to the biosynthesis of aromatic amino acids. Catalyzes the reversible NADPH linked reduction of 3-dehydroshikimate (DHSA) to yield shikimate (SA). The sequence is that of Shikimate dehydrogenase (NADP(+)) from Erwinia tasmaniensis (strain DSM 17950 / CFBP 7177 / CIP 109463 / NCPPB 4357 / Et1/99).